We begin with the raw amino-acid sequence, 339 residues long: Biotin synthase (339 aa).

The Radical SAM core domain maps to N55 to R282. 3 residues coordinate [4Fe-4S] cluster: C70, C74, and C77. Positions 114, 145, 205, and 277 each coordinate [2Fe-2S] cluster.

The protein belongs to the radical SAM superfamily. Biotin synthase family. As to quaternary structure, homodimer. The cofactor is [4Fe-4S] cluster. Requires [2Fe-2S] cluster as cofactor.

It catalyses the reaction (4R,5S)-dethiobiotin + (sulfur carrier)-SH + 2 reduced [2Fe-2S]-[ferredoxin] + 2 S-adenosyl-L-methionine = (sulfur carrier)-H + biotin + 2 5'-deoxyadenosine + 2 L-methionine + 2 oxidized [2Fe-2S]-[ferredoxin]. It participates in cofactor biosynthesis; biotin biosynthesis; biotin from 7,8-diaminononanoate: step 2/2. Its function is as follows. Catalyzes the conversion of dethiobiotin (DTB) to biotin by the insertion of a sulfur atom into dethiobiotin via a radical-based mechanism. This is Biotin synthase from Burkholderia cenocepacia (strain ATCC BAA-245 / DSM 16553 / LMG 16656 / NCTC 13227 / J2315 / CF5610) (Burkholderia cepacia (strain J2315)).